A 227-amino-acid chain; its full sequence is 2-C-methyl-D-erythritol 4-phosphate cytidylyltransferase (227 aa).

The protein belongs to the IspD/TarI cytidylyltransferase family. IspD subfamily.

The catalysed reaction is 2-C-methyl-D-erythritol 4-phosphate + CTP + H(+) = 4-CDP-2-C-methyl-D-erythritol + diphosphate. It participates in isoprenoid biosynthesis; isopentenyl diphosphate biosynthesis via DXP pathway; isopentenyl diphosphate from 1-deoxy-D-xylulose 5-phosphate: step 2/6. Functionally, catalyzes the formation of 4-diphosphocytidyl-2-C-methyl-D-erythritol from CTP and 2-C-methyl-D-erythritol 4-phosphate (MEP). In Dehalococcoides mccartyi (strain CBDB1), this protein is 2-C-methyl-D-erythritol 4-phosphate cytidylyltransferase.